The chain runs to 334 residues: Phenazine-1-carboxylate N-methyltransferase (334 aa).

2 residues coordinate S-adenosyl-L-methionine: Asp198 and Arg241.

The protein belongs to the class I-like SAM-binding methyltransferase superfamily. Cation-independent O-methyltransferase family. Homodimer in solution. Probably interacts transiently with PhzS.

It catalyses the reaction phenazine-1-carboxylate + S-adenosyl-L-methionine = 5-methyl-phenazine-1-carboxylate + S-adenosyl-L-homocysteine. The protein operates within secondary metabolite biosynthesis; pyocyanine biosynthesis. In vitro, requires PhzS for activity. Involved in the biosynthesis of pyocyanine, a blue-pigmented phenazine derivative, which plays a role in virulence. Converts phenazine-1-carboxylate (PCA) to 5-methylphenazine-1-carboxylate (5-methyl-PCA). The polypeptide is Phenazine-1-carboxylate N-methyltransferase (Pseudomonas aeruginosa (strain ATCC 15692 / DSM 22644 / CIP 104116 / JCM 14847 / LMG 12228 / 1C / PRS 101 / PAO1)).